The sequence spans 278 residues: 2-dehydro-3-deoxyphosphooctonate aldolase (278 aa).

This sequence belongs to the KdsA family.

Its subcellular location is the cytoplasm. It catalyses the reaction D-arabinose 5-phosphate + phosphoenolpyruvate + H2O = 3-deoxy-alpha-D-manno-2-octulosonate-8-phosphate + phosphate. It participates in carbohydrate biosynthesis; 3-deoxy-D-manno-octulosonate biosynthesis; 3-deoxy-D-manno-octulosonate from D-ribulose 5-phosphate: step 2/3. Its pathway is bacterial outer membrane biogenesis; lipopolysaccharide biosynthesis. This Fusobacterium nucleatum subsp. nucleatum (strain ATCC 25586 / DSM 15643 / BCRC 10681 / CIP 101130 / JCM 8532 / KCTC 2640 / LMG 13131 / VPI 4355) protein is 2-dehydro-3-deoxyphosphooctonate aldolase.